The following is a 334-amino-acid chain: Glyceraldehyde-3-phosphate dehydrogenase 1 (334 aa).

NAD(+)-binding positions include 11-12 (RI), Asp33, Arg77, and Ser119. Residues 150 to 152 (SCT) and Thr181 each bind D-glyceraldehyde 3-phosphate. Cys151 (nucleophile) is an active-site residue. An NAD(+)-binding site is contributed by Asn182. Residues Arg196, 209 to 210 (TG), and Arg232 contribute to the D-glyceraldehyde 3-phosphate site. Asn314 is an NAD(+) binding site.

This sequence belongs to the glyceraldehyde-3-phosphate dehydrogenase family. Homotetramer.

The protein localises to the cytoplasm. It carries out the reaction D-glyceraldehyde 3-phosphate + phosphate + NAD(+) = (2R)-3-phospho-glyceroyl phosphate + NADH + H(+). It participates in carbohydrate degradation; glycolysis; pyruvate from D-glyceraldehyde 3-phosphate: step 1/5. Its function is as follows. Catalyzes the oxidative phosphorylation of glyceraldehyde 3-phosphate (G3P) to 1,3-bisphosphoglycerate (BPG) using the cofactor NAD. The first reaction step involves the formation of a hemiacetal intermediate between G3P and a cysteine residue, and this hemiacetal intermediate is then oxidized to a thioester, with concomitant reduction of NAD to NADH. The reduced NADH is then exchanged with the second NAD, and the thioester is attacked by a nucleophilic inorganic phosphate to produce BPG. This chain is Glyceraldehyde-3-phosphate dehydrogenase 1 (gap1), found in Bacillus cereus.